Consider the following 492-residue polypeptide: Protein PAIR1 (492 aa).

Residues 166–186 are a coiled coil; it reads VDSVQSDVMQLNRAMKEASLD. Residues 479–483 carry the Nuclear localization signal motif; it reads KRRRR.

As to quaternary structure, interacts with CRC1. As to expression, expressed in reproductive organs, but not in vegetative organs.

It is found in the nucleus. Functionally, involved in spore formation. Plays an essential role in the establishment of homologous chromosome pairing in early meiosis. The chain is Protein PAIR1 (PAIR1) from Oryza sativa subsp. japonica (Rice).